The chain runs to 263 residues: Adaptin ear-binding coat-associated protein 2 (263 aa).

Disordered regions lie at residues 167 to 191 (KKEG…LPPP) and 209 to 263 (GGSL…WVQF). At Ser-181 the chain carries Phosphoserine. Short sequence motifs (WXXF motif) lie at residues 218–221 (GSGG) and 238–241 (DIWG). The segment covering 246–263 (STGSPSSQSQPGTGWVQF) has biased composition (low complexity).

It belongs to the NECAP family. Interacts with AP1G1 and AP2A1 components of the adapter protein complexes AP-1 and AP-2. Interacts with the GAE domain proteins GGA1, GGA2 and GGA3. Expressed in brain, heart, kidney, liver and lung (at protein level).

It is found in the cytoplasmic vesicle. Its subcellular location is the clathrin-coated vesicle membrane. The protein localises to the cell membrane. In terms of biological role, involved in endocytosis. The sequence is that of Adaptin ear-binding coat-associated protein 2 (Necap2) from Rattus norvegicus (Rat).